The primary structure comprises 264 residues: Thymidylate synthase (264 aa).

Arg21 serves as a coordination point for dUMP. His51 is a binding site for (6R)-5,10-methylene-5,6,7,8-tetrahydrofolate. A dUMP-binding site is contributed by 126–127; that stretch reads RR. Cys146 functions as the Nucleophile in the catalytic mechanism. DUMP contacts are provided by residues 166 to 169, Asn177, and 207 to 209; these read RSAD and HLY. Asp169 is a binding site for (6R)-5,10-methylene-5,6,7,8-tetrahydrofolate. Residue Ser263 participates in (6R)-5,10-methylene-5,6,7,8-tetrahydrofolate binding.

The protein belongs to the thymidylate synthase family. Bacterial-type ThyA subfamily. In terms of assembly, homodimer.

It is found in the cytoplasm. The enzyme catalyses dUMP + (6R)-5,10-methylene-5,6,7,8-tetrahydrofolate = 7,8-dihydrofolate + dTMP. It functions in the pathway pyrimidine metabolism; dTTP biosynthesis. Functionally, catalyzes the reductive methylation of 2'-deoxyuridine-5'-monophosphate (dUMP) to 2'-deoxythymidine-5'-monophosphate (dTMP) while utilizing 5,10-methylenetetrahydrofolate (mTHF) as the methyl donor and reductant in the reaction, yielding dihydrofolate (DHF) as a by-product. This enzymatic reaction provides an intracellular de novo source of dTMP, an essential precursor for DNA biosynthesis. The protein is Thymidylate synthase of Neisseria meningitidis serogroup C / serotype 2a (strain ATCC 700532 / DSM 15464 / FAM18).